The following is a 93-amino-acid chain: DNA-binding protein HB1 (93 aa).

The protein belongs to the bacterial histone-like protein family. As to quaternary structure, homodimer.

Histone-like DNA-binding protein which is capable of wrapping DNA to stabilize it, and thus to prevent its denaturation under extreme environmental conditions. The protein is DNA-binding protein HB1 (hup) of Bifidobacterium longum (strain NCC 2705).